Reading from the N-terminus, the 1050-residue chain is Collagen alpha-2(I) chain (1050 aa).

The interval serine 1–alanine 1050 is disordered. Proline 10 and proline 13 each carry 4-hydroxyproline. Gly residues predominate over residues arginine 20–glycine 32. Low complexity-rich tracts occupy residues leucine 33 to proline 46 and glutamate 56 to lysine 77. Residues proline 40 and proline 46 each carry the 4-hydroxyproline modification. Over residues alanine 78–glutamate 92 the composition is skewed to basic and acidic residues. Position 114 is a 5-hydroxylysine; alternate (lysine 114). Lysine 114 is a glycosylation site (O-linked (Gal...) hydroxylysine; alternate). Low complexity-rich tracts occupy residues valine 161–proline 190, proline 236–proline 257, glutamate 298–serine 311, asparagine 320–proline 338, and proline 355–serine 371. Proline 377 and proline 380 each carry 4-hydroxyproline. 2 stretches are compositionally biased toward low complexity: residues leucine 406–alanine 425 and alanine 452–glutamine 467. Over residues glycine 474–glycine 483 the composition is skewed to gly residues. Composition is skewed to low complexity over residues proline 530–proline 547, valine 598–serine 642, and valine 649–alanine 669. Positions lysine 670–lysine 679 are enriched in basic and acidic residues. Positions proline 687 to alanine 697 are enriched in low complexity. Positions glycine 707 to glycine 716 are enriched in gly residues. Low complexity predominate over residues threonine 718–threonine 727. A compositionally biased stretch (gly residues) spans glycine 764–glycine 773. Composition is skewed to low complexity over residues serine 781–proline 808, leucine 816–serine 841, tyrosine 881–alanine 903, and glutamate 911–proline 926. Positions arginine 936–proline 947 are enriched in basic and acidic residues. Pro residues predominate over residues serine 1020–proline 1032.

It belongs to the fibrillar collagen family. In terms of assembly, trimers of one alpha 2(I) and two alpha 1(I) chains. Interacts (via C-terminus) with TMEM131 (via PapD-L domain); the interaction is direct and is involved in assembly and TRAPPIII ER-to-Golgi transport complex-dependent secretion of collagen. Prolines at the third position of the tripeptide repeating unit (G-X-Y) are hydroxylated in some or all of the chains. Expressed in bones.

The protein resides in the secreted. Its subcellular location is the extracellular space. It localises to the extracellular matrix. In terms of biological role, type I collagen is a member of group I collagen (fibrillar forming collagen). The chain is Collagen alpha-2(I) chain from Megatherium americanum (Giant ground sloth).